The chain runs to 189 residues: MADILTQLQTCLDQLATQFYATIGYLSTYHDNSPATTPTNIPNAAPALAKIPKNSTAPPVPAGAPVPSQSSPPPPQTQRGASEAAADPNLPPAPDSPRTFASRQRELARDLIIKEQQIEYLISVLPGIDSSEAEQEKRIRELEAELRGVEEEREAKIRELRTLGRTLERVMGAVETGIYGDRAVLERDS.

The interval 50 to 102 (KIPKNSTAPPVPAGAPVPSQSSPPPPQTQRGASEAAADPNLPPAPDSPRTFAS) is disordered. Over residues 58-76 (PPVPAGAPVPSQSSPPPPQ) the composition is skewed to pro residues. A coiled-coil region spans residues 127-170 (GIDSSEAEQEKRIRELEAELRGVEEEREAKIRELRTLGRTLERV).

Belongs to the Mediator complex subunit 21 family. In terms of assembly, component of the Mediator complex.

It is found in the nucleus. In terms of biological role, component of the Mediator complex, a coactivator involved in the regulated transcription of nearly all RNA polymerase II-dependent genes. Mediator functions as a bridge to convey information from gene-specific regulatory proteins to the basal RNA polymerase II transcription machinery. Mediator is recruited to promoters by direct interactions with regulatory proteins and serves as a scaffold for the assembly of a functional preinitiation complex with RNA polymerase II and the general transcription factors. In Aspergillus clavatus (strain ATCC 1007 / CBS 513.65 / DSM 816 / NCTC 3887 / NRRL 1 / QM 1276 / 107), this protein is Mediator of RNA polymerase II transcription subunit 21 (srb7).